We begin with the raw amino-acid sequence, 100 residues long: Small ribosomal subunit protein uS14c (100 aa).

This sequence belongs to the universal ribosomal protein uS14 family. As to quaternary structure, part of the 30S ribosomal subunit.

The protein resides in the plastid. It is found in the cyanelle. Functionally, binds 16S rRNA, required for the assembly of 30S particles. This chain is Small ribosomal subunit protein uS14c, found in Cyanophora paradoxa.